The primary structure comprises 96 residues: MQLYTYLYLLVPLVTFHLILGTGTLDHGDALTERRSTDATALKPEPVLLQKSSARSTNDNGKDTQMKRILKKRGNKARGEEELAEKAPEFARELAN.

Positions 1–21 are cleaved as a signal peptide; the sequence is MQLYTYLYLLVPLVTFHLILG. Positions 22 to 78 are excised as a propeptide; the sequence is TGTLDHGDALTERRSTDATALKPEPVLLQKSSARSTNDNGKDTQMKRILKKRGNKAR. The tract at residues 51–96 is disordered; that stretch reads KSSARSTNDNGKDTQMKRILKKRGNKARGEEELAEKAPEFARELAN. The segment covering 77–96 has biased composition (basic and acidic residues); it reads ARGEEELAEKAPEFARELAN. Residue Glu81 coordinates a divalent metal cation. Residues Glu81, Glu82, and Glu85 each carry the 4-carboxyglutamate modification. Glu85 provides a ligand contact to a divalent metal cation. A 4-hydroxyproline modification is found at Pro88. A divalent metal cation contacts are provided by Glu89 and Glu93. 4-carboxyglutamate occurs at positions 89 and 93. Residue Asn96 is modified to Asparagine amide.

It belongs to the conotoxin B superfamily. Ca(2+) is required as a cofactor. Mg(2+) serves as cofactor. Hydroxylation of Pro-88 is important for NR2B/GRIN2B NMDA receptor selectivity. Removal of hydroxylation does not change global NMDA receptor antagonism (tested on WT neurons), but it decreases the inhibitory potency on NR2B/GRIN2B NMDA receptors and increases the inhibitory potency on NR2A/GRIN2A NMDA receptors. Hydroxylation of Pro-88 locally disrupts a small region of the divalent cation-induced alpha-helix but does not destabilize the entire helix. In terms of tissue distribution, expressed by the venom duct.

Its subcellular location is the secreted. In terms of biological role, conantokins inhibit N-methyl-D-aspartate (NMDA) receptors. This toxin has antagonist activity on the NR2B/GRIN2B subunit (IC(50)=0.1 uM). In vivo, when delivered into the brain, is active has anticonvulsant activity in the model of epilepsy in mice. This chain is Conantokin Rl-B, found in Conus rolani (Cone snail).